The sequence spans 82 residues: Small ribosomal subunit protein uS17 (82 aa).

This sequence belongs to the universal ribosomal protein uS17 family. Part of the 30S ribosomal subunit.

One of the primary rRNA binding proteins, it binds specifically to the 5'-end of 16S ribosomal RNA. The protein is Small ribosomal subunit protein uS17 of Xanthobacter autotrophicus (strain ATCC BAA-1158 / Py2).